Here is a 25-residue protein sequence, read N- to C-terminus: Bifunctional chitinase/lysozyme (25 aa).

Belongs to the glycosyl hydrolase 19 family. Chitinase class I subfamily. In terms of assembly, monomer.

Its subcellular location is the secreted. The protein resides in the extracellular space. The enzyme catalyses Random endo-hydrolysis of N-acetyl-beta-D-glucosaminide (1-&gt;4)-beta-linkages in chitin and chitodextrins.. It carries out the reaction Hydrolysis of (1-&gt;4)-beta-linkages between N-acetylmuramic acid and N-acetyl-D-glucosamine residues in a peptidoglycan and between N-acetyl-D-glucosamine residues in chitodextrins.. In terms of biological role, bifunctional enzyme with lysozyme/chitinase activity. The chain is Bifunctional chitinase/lysozyme from Carica papaya (Papaya).